A 376-amino-acid chain; its full sequence is Geranylgeranyl transferase type-1 subunit beta (376 aa).

4 PFTB repeats span residues 128-179, 192-231, 259-301, and 310-353; these read KRSL…YICG, TEKL…ALLS, MKFE…HLLT, and TELV…ALIE. Residues 216–218 and 280–283 contribute to the geranylgeranyl diphosphate site; these read HSG and RENK. Aspartate 286 and cysteine 288 together coordinate Zn(2+). A geranylgeranyl diphosphate-binding site is contributed by 289–292; sequence YAFW. Histidine 341 lines the Zn(2+) pocket.

The protein belongs to the protein prenyltransferase subunit beta family. Heterodimer of an alpha (RAM2) and a beta (CDC43) subunit. The cofactor is Zn(2+). Requires Mg(2+) as cofactor.

Its subcellular location is the cytoplasm. The catalysed reaction is geranylgeranyl diphosphate + L-cysteinyl-[protein] = S-geranylgeranyl-L-cysteinyl-[protein] + diphosphate. In terms of biological role, catalyzes the transfer of a geranyl-geranyl moiety from geranyl-geranyl diphosphate to proteins having the C-terminal sequence Cys-Ile-Ile-Leu or Cys-Val-Leu-Leu. Acts, among other substrates, on Rho1 and Rho2 and CDC42 proteins. Participates in a RAS-like C-terminal modification of proteins involved in nuclear division and bud growth. It is involved in bud positioning and cell polarity. The beta subunit is responsible for isoprenoid and peptide-binding. The polypeptide is Geranylgeranyl transferase type-1 subunit beta (CDC43) (Saccharomyces cerevisiae (strain ATCC 204508 / S288c) (Baker's yeast)).